Consider the following 269-residue polypeptide: tRNA pseudouridine synthase A (269 aa).

D51 (nucleophile) is an active-site residue. Y109 contacts substrate.

This sequence belongs to the tRNA pseudouridine synthase TruA family. As to quaternary structure, homodimer.

The catalysed reaction is uridine(38/39/40) in tRNA = pseudouridine(38/39/40) in tRNA. Its function is as follows. Formation of pseudouridine at positions 38, 39 and 40 in the anticodon stem and loop of transfer RNAs. The chain is tRNA pseudouridine synthase A from Haemophilus influenzae (strain 86-028NP).